Reading from the N-terminus, the 111-residue chain is Putative ciliary rootlet coiled-coil protein-like 1 protein (111 aa).

Residues 21–86 (MELELSVTKL…RQAEQEATVA (66 aa)) are a coiled coil.

The protein belongs to the rootletin family.

In Homo sapiens (Human), this protein is Putative ciliary rootlet coiled-coil protein-like 1 protein (CROCCP2).